The chain runs to 522 residues: MTKLTDEVKKRRTFAIISHPDAGKTTITEQMLLFGGVIRSAGTVKARKSGHYATSDWMAIEKKRGISVTSSVMQFEYQGKRINILDTPGHQDFSEDTYRTLMAVDAAVMVIDSAKGIEPQTKKLFKVVKKRGIPIFTFMNKLDRDGREPLDLIAELEDLLGIEGVAMNWPIGMGKQLKGLYDIANNRVELYRKDDDDRYLPLDKNGKLAEDEPLAQDSLYQSTLDDIDLLKEAGNTFDKEKILKGDQTPVFFGSALTNFGVETFLDSFVNLAPAPQEHIVNGDEKLAADDPEFSGFVFKIQANMNPNHRDRIAFVRIGSGEFKKGIDVTLARTGKPVRLNNATEFMSSERVQVSDAVAGDIVGLYDTGNFQIGDSIYAGKKKIVYPALPQFTPEIFMRVTAKNVMKQKSFHKGMNQLVQEGAIQLYRGYSTDDYILGAVGQLQFEVFSFRMKNEYNSEVELHTLGNRVARWINPDQLDPKMSSSRNLLVKDRDGEPLFLFENAFAERWFKDKYPDVELTSRL.

The tr-type G domain occupies 9 to 276; the sequence is KKRRTFAIIS…SFVNLAPAPQ (268 aa). GTP-binding positions include 18–25, 86–90, and 140–143; these read SHPDAGKT, DTPGH, and NKLD.

This sequence belongs to the TRAFAC class translation factor GTPase superfamily. Classic translation factor GTPase family. PrfC subfamily.

The protein localises to the cytoplasm. In terms of biological role, increases the formation of ribosomal termination complexes and stimulates activities of RF-1 and RF-2. It binds guanine nucleotides and has strong preference for UGA stop codons. It may interact directly with the ribosome. The stimulation of RF-1 and RF-2 is significantly reduced by GTP and GDP, but not by GMP. The polypeptide is Peptide chain release factor 3 (Lactobacillus gasseri (strain ATCC 33323 / DSM 20243 / BCRC 14619 / CIP 102991 / JCM 1131 / KCTC 3163 / NCIMB 11718 / NCTC 13722 / AM63)).